Consider the following 425-residue polypeptide: Orexin/Hypocretin receptor type 1 (425 aa).

Positions 1 to 24 (MEPSATPGAQMGVPPGSREPSPVP) are disordered. Residues 1 to 46 (MEPSATPGAQMGVPPGSREPSPVPPDYEDEFLRYLWRDYLYPKQYE) are Extracellular-facing. Residues 26-41 (DYEDEFLRYLWRDYLY) form a required for response to orexin-A region. Residues 47-67 (WVLIAAYVAVFVVALVGNTLV) traverse the membrane as a helical segment. At 68–82 (CLAVWRNHHMRTVTN) the chain is on the cytoplasmic side. Residues 83–105 (YFIVNLSLADVLVTAICLPASLL) traverse the membrane as a helical segment. Topologically, residues 106–119 (VDITESWLFGHALC) are extracellular. A disulfide bridge links cysteine 119 with cysteine 202. Residues 120–140 (KVIPYLQAVSVSVAVLTLSFI) form a helical membrane-spanning segment. At 141 to 160 (ALDRWYAICHPLLFKSTARR) the chain is on the cytoplasmic side. A helical transmembrane segment spans residues 161–182 (ARGSILGIWAVSLAIMVPQAAV). The Extracellular segment spans residues 183–213 (MECSSVLPELANRTRLFSVCDERWADDLYPK). N-linked (GlcNAc...) asparagine glycosylation is present at asparagine 194. A helical transmembrane segment spans residues 214-235 (IYHSCFFIVTYLAPLGLMAMAY). Topologically, residues 236-298 (FQIFRKLWGR…QMRARRKTAK (63 aa)) are cytoplasmic. The helical transmembrane segment at 299 to 321 (MLMVVLLVFALCYLPISVLNVLK) threads the bilayer. Asparagine 318 is a binding site for suvorexant. At 322 to 336 (RVFGMFRQASDREAV) the chain is on the extracellular side. A helical transmembrane segment spans residues 337-360 (YACFTFSHWLVYANSAANPIIYNF). The Cytoplasmic segment spans residues 361-425 (LSGKFREQFK…VLTSVTTVLP (65 aa)).

The protein belongs to the G-protein coupled receptor 1 family.

The protein localises to the cell membrane. Functionally, moderately selective excitatory receptor for orexin-A and, with a lower affinity, for orexin-B neuropeptide. Triggers an increase in cytoplasmic Ca(2+) levels in response to orexin-A binding. In Homo sapiens (Human), this protein is Orexin/Hypocretin receptor type 1.